The chain runs to 348 residues: MAKEHGAMRSVLNLIGSVMLPQDTSNCSDRHDTPSAPEFLSHLQPFQTVLLSIASFSTTIVLCLSLIHWFYVYKYVSIEKRRNKLYWLIAVFPVACSCSFIAMCVPRTAVILTCIGVLYYLMCLFVIVSLARHLFGGRESFSTCLQYDDRPIDFRSPPFCCIIPKLPTARSTEKNIRRLEWCVLQAPIVRSIIIFLDVVAVAEMREDATPYIRYSDMASLCSLLLAIFGVHTLARVTSNKLSAYCFMSMFRLVDISLLFFSAQQPMIFQNVLLRFNLISCGPLLNAQENAYFVCNFIITCEMLLLSVLATWLLAPRHNAMFDAYRPSMALSETTASLNETEQSMILDH.

Topologically, residues 1–49 (MAKEHGAMRSVLNLIGSVMLPQDTSNCSDRHDTPSAPEFLSHLQPFQTV) are extracellular. N-linked (GlcNAc...) asparagine glycosylation is present at asparagine 26. A helical transmembrane segment spans residues 50 to 70 (LLSIASFSTTIVLCLSLIHWF). The Cytoplasmic segment spans residues 71–84 (YVYKYVSIEKRRNK). The helical transmembrane segment at 85–105 (LYWLIAVFPVACSCSFIAMCV) threads the bilayer. Residues 106-109 (PRTA) lie on the Extracellular side of the membrane. A helical transmembrane segment spans residues 110–130 (VILTCIGVLYYLMCLFVIVSL). Residues 131 to 180 (ARHLFGGRESFSTCLQYDDRPIDFRSPPFCCIIPKLPTARSTEKNIRRLE) are Cytoplasmic-facing. A helical membrane pass occupies residues 181 to 201 (WCVLQAPIVRSIIIFLDVVAV). The Extracellular segment spans residues 202–213 (AEMREDATPYIR). The chain crosses the membrane as a helical span at residues 214-234 (YSDMASLCSLLLAIFGVHTLA). The Cytoplasmic segment spans residues 235-240 (RVTSNK). A helical membrane pass occupies residues 241–261 (LSAYCFMSMFRLVDISLLFFS). The Extracellular segment spans residues 262 to 291 (AQQPMIFQNVLLRFNLISCGPLLNAQENAY). The helical transmembrane segment at 292–312 (FVCNFIITCEMLLLSVLATWL) threads the bilayer. The Cytoplasmic segment spans residues 313 to 348 (LAPRHNAMFDAYRPSMALSETTASLNETEQSMILDH).

It belongs to the OST-alpha family.

The protein resides in the cell membrane. Its function is as follows. Probable transporter. The sequence is that of Organic solute transporter alpha-like protein 3 (osta-3) from Caenorhabditis elegans.